The following is a 92-amino-acid chain: Cell division protein FtsB (92 aa).

Residues 1–3 are Cytoplasmic-facing; that stretch reads MRL. The helical transmembrane segment at 4–21 threads the bilayer; the sequence is LILILLSVLVLFQYNFWF. Residues 22–92 are Periplasmic-facing; the sequence is GSNGFLDYRQ…VFYHIVKESK (71 aa). Residues 28-63 are a coiled coil; the sequence is DYRQNAEKIKENQAENEKLSQRNQRINAEIQGLTKG.

This sequence belongs to the FtsB family. In terms of assembly, part of a complex composed of FtsB, FtsL and FtsQ.

The protein localises to the cell inner membrane. In terms of biological role, essential cell division protein. May link together the upstream cell division proteins, which are predominantly cytoplasmic, with the downstream cell division proteins, which are predominantly periplasmic. The sequence is that of Cell division protein FtsB from Haemophilus influenzae (strain 86-028NP).